The following is a 333-amino-acid chain: MEENDPKPGEAAAAVEGQRQPESSPGGGSGGGGGSSPGEADTGRRRALMLPAVLQAPGNHQHPHRITNFFIDNILRPEFGRRKDAGTCCAGAGGGRGGGAGGEGGASGAEGGGGAGGSEQLLGSGSREPRQNPPCAPGAGGPLPAAGSDSPGDGEGGSKTLSLHGGAKKGGDPGGPLDGSLKARGLGGGDLSVSSDSDSSQAGANLGAQPMLWPAWVYCTRYSDRPSSGPRSRKPKKKNPNKEDKRPRTAFTAEQLQRLKAEFQTNRYLTEQRRQSLAQELSLNESQIKIWFQNKRAKIKKATGNKNTLAVHLMAQGLYNHSTTAKEGKSDSE.

Disordered stretches follow at residues 1–49 (MEEN…RALM), 95–206 (GRGG…GANL), and 223–250 (SDRPSSGPRSRKPKKKNPNKEDKRPRTA). 2 stretches are compositionally biased toward gly residues: residues 25–36 (PGGGSGGGGGSS) and 95–117 (GRGGGAGGEGGASGAEGGGGAGG). 2 stretches are compositionally biased toward low complexity: residues 142–151 (PLPAAGSDSP) and 191–200 (LSVSSDSDSS). Residues 244–303 (DKRPRTAFTAEQLQRLKAEFQTNRYLTEQRRQSLAQELSLNESQIKIWFQNKRAKIKKAT) constitute a DNA-binding region (homeobox).

Belongs to the engrailed homeobox family.

It is found in the nucleus. The chain is Homeobox protein engrailed-2 (EN2) from Homo sapiens (Human).